The chain runs to 188 residues: Inosine triphosphate pyrophosphatase (188 aa).

ITP is bound at residue Thr12 to Lys17. Glu40 contributes to the Mg(2+) binding site. ITP contacts are provided by residues Lys52, Asp68–Thr69, Lys85, Phe144–Asp147, Lys165, and His170–Arg171.

Belongs to the HAM1 NTPase family. As to quaternary structure, homodimer. The cofactor is Mg(2+). Mn(2+) is required as a cofactor.

The protein localises to the cytoplasm. It localises to the nucleus. It catalyses the reaction ITP + H2O = IMP + diphosphate + H(+). It carries out the reaction dITP + H2O = dIMP + diphosphate + H(+). The enzyme catalyses XTP + H2O = XMP + diphosphate + H(+). Pyrophosphatase that hydrolyzes non-canonical purine nucleotides such as inosine triphosphate (ITP), deoxyinosine triphosphate (dITP) or xanthosine 5'-triphosphate (XTP) to their respective monophosphate derivatives. The enzyme does not distinguish between the deoxy- and ribose forms. Probably excludes non-canonical purines from RNA and DNA precursor pools, thus preventing their incorporation into RNA and DNA and avoiding chromosomal lesions. The protein is Inosine triphosphate pyrophosphatase of Podospora anserina (strain S / ATCC MYA-4624 / DSM 980 / FGSC 10383) (Pleurage anserina).